The following is a 310-amino-acid chain: p-hydroxybenzoic acid efflux pump subunit AaeA (310 aa).

A helical membrane pass occupies residues 12–32 (AITLVLVILAFIAIFRAWVYY).

This sequence belongs to the membrane fusion protein (MFP) (TC 8.A.1) family.

Its subcellular location is the cell inner membrane. Forms an efflux pump with AaeB. This is p-hydroxybenzoic acid efflux pump subunit AaeA from Salmonella arizonae (strain ATCC BAA-731 / CDC346-86 / RSK2980).